We begin with the raw amino-acid sequence, 295 residues long: Glycine N-acyltransferase-like protein Keg1 (295 aa).

The residue at position 41 (K41) is an N6-acetyllysine; alternate. K41 is modified (N6-succinyllysine; alternate). The residue at position 43 (K43) is an N6-acetyllysine. K48 is modified (N6-acetyllysine; alternate). Residue K48 is modified to N6-succinyllysine; alternate. An N6-acetyllysine mark is found at K80 and K83. N6-acetyllysine; alternate occurs at positions 124, 128, and 140. Residues K124, K128, and K140 each carry the N6-succinyllysine; alternate modification. K150 is modified (N6-acetyllysine). N6-acetyllysine; alternate is present on K255. The residue at position 255 (K255) is an N6-succinyllysine; alternate.

It belongs to the glycine N-acyltransferase family. Binds to microtubules.

Its subcellular location is the cytoplasm. It localises to the cytoskeleton. The protein localises to the microtubule organizing center. The protein resides in the centrosome. The enzyme catalyses an acyl-CoA + glycine = an N-acylglycine + CoA + H(+). Functionally, acyltransferase which transfers the acyl group to the N-terminus of glycine. Can conjugate a multitude of substrates to form a variety of N-acylglycines. This is Glycine N-acyltransferase-like protein Keg1 (Keg1) from Mus musculus (Mouse).